The chain runs to 2267 residues: Acetyl-CoA carboxylase 1 (2267 aa).

The region spanning 38-544 (PIHSVLVANN…HTGWLDSRIA (507 aa)) is the Biotin carboxylation domain. Positions 190–384 (PESCNSIPEE…AAQVVVGMGV (195 aa)) constitute an ATP-grasp domain. An ATP-binding site is contributed by 216 to 273 (CQVVGYPAMIKASWGGGGKGIRKVHNDDEVRALFKQVQGEVPGSPIFIMKVASQSRHL). Mg(2+)-binding residues include Glu339, Glu353, and Asn355. Residues Glu339, Glu353, and Asn355 each contribute to the Mn(2+) site. Arg357 is a catalytic residue. Positions 671 to 745 (LQKEHDPSKL…QAADLIARLD (75 aa)) constitute a Biotinyl-binding domain. Lys712 is subject to N6-biotinyllysine. The CoA carboxyltransferase N-terminal domain occupies 1502-1843 (PYKPLDAIDL…YVGGPLPIMK (342 aa)). Residues 1502-2163 (PYKPLDAIDL…EDALAKEIRE (662 aa)) form a carboxyltransferase region. CoA contacts are provided by Arg1752, Lys2053, and Arg2055. The region spanning 1847 to 2163 (PPDRPVTYFP…EDALAKEIRE (317 aa)) is the CoA carboxyltransferase C-terminal domain.

As to quaternary structure, homodimer. It depends on Mg(2+) as a cofactor. Requires Mn(2+) as cofactor. Biotin serves as cofactor.

The protein resides in the cytoplasm. The protein localises to the cytosol. The catalysed reaction is hydrogencarbonate + acetyl-CoA + ATP = malonyl-CoA + ADP + phosphate + H(+). It carries out the reaction N(6)-biotinyl-L-lysyl-[protein] + hydrogencarbonate + ATP = N(6)-carboxybiotinyl-L-lysyl-[protein] + ADP + phosphate + H(+). The protein operates within lipid metabolism; malonyl-CoA biosynthesis; malonyl-CoA from acetyl-CoA: step 1/1. Multifunctional enzyme that catalyzes the carboxylation of acetyl-CoA, forming malonyl-CoA, which is used in the plastid for fatty acid synthesis and in the cytosol in various biosynthetic pathways including fatty acid elongation. The sequence is that of Acetyl-CoA carboxylase 1 (ACC1) from Oryza sativa subsp. japonica (Rice).